The chain runs to 117 residues: Immunoglobulin kappa variable 1D-43 (117 aa).

A signal peptide spans 1–22 (MDMRVPAQRLGLLLLWFPGARC). Residues 23–45 (AIRMTQSPFSLSASVGDRVTITC) are framework-1. The region spanning 23-117 (AIRMTQSPFS…YYCQQYYSTP (95 aa)) is the Ig-like domain. Cys45 and Cys110 form a disulfide bridge. Residues 46-56 (WASQGISSYLA) form a complementarity-determining-1 region. Residues 57-71 (WYQQKPAKAPKLFIY) are framework-2. The interval 72–78 (YASSLQS) is complementarity-determining-2. The framework-3 stretch occupies residues 79–110 (GVPSRFSGSGSGTDYTLTISSLQPEDFATYYC). Residues 111-117 (QQYYSTP) are complementarity-determining-3.

Immunoglobulins are composed of two identical heavy chains and two identical light chains; disulfide-linked.

It localises to the secreted. It is found in the cell membrane. In terms of biological role, v region of the variable domain of immunoglobulin light chains that participates in the antigen recognition. Immunoglobulins, also known as antibodies, are membrane-bound or secreted glycoproteins produced by B lymphocytes. In the recognition phase of humoral immunity, the membrane-bound immunoglobulins serve as receptors which, upon binding of a specific antigen, trigger the clonal expansion and differentiation of B lymphocytes into immunoglobulins-secreting plasma cells. Secreted immunoglobulins mediate the effector phase of humoral immunity, which results in the elimination of bound antigens. The antigen binding site is formed by the variable domain of one heavy chain, together with that of its associated light chain. Thus, each immunoglobulin has two antigen binding sites with remarkable affinity for a particular antigen. The variable domains are assembled by a process called V-(D)-J rearrangement and can then be subjected to somatic hypermutations which, after exposure to antigen and selection, allow affinity maturation for a particular antigen. The sequence is that of Immunoglobulin kappa variable 1D-43 from Homo sapiens (Human).